The sequence spans 350 residues: Phosphoribosylformylglycinamidine cyclo-ligase (350 aa).

Belongs to the AIR synthase family.

Its subcellular location is the cytoplasm. It catalyses the reaction 2-formamido-N(1)-(5-O-phospho-beta-D-ribosyl)acetamidine + ATP = 5-amino-1-(5-phospho-beta-D-ribosyl)imidazole + ADP + phosphate + H(+). It participates in purine metabolism; IMP biosynthesis via de novo pathway; 5-amino-1-(5-phospho-D-ribosyl)imidazole from N(2)-formyl-N(1)-(5-phospho-D-ribosyl)glycinamide: step 2/2. This chain is Phosphoribosylformylglycinamidine cyclo-ligase, found in Cupriavidus taiwanensis (strain DSM 17343 / BCRC 17206 / CCUG 44338 / CIP 107171 / LMG 19424 / R1) (Ralstonia taiwanensis (strain LMG 19424)).